The sequence spans 162 residues: Nucleotide-binding protein Franean1_6074 (162 aa).

Belongs to the YajQ family.

Its function is as follows. Nucleotide-binding protein. The protein is Nucleotide-binding protein Franean1_6074 of Parafrankia sp. (strain EAN1pec).